The following is a 361-amino-acid chain: Aromatic amino acid aminotransferase (361 aa).

Lysine 221 carries the N6-(pyridoxal phosphate)lysine modification.

Belongs to the class-II pyridoxal-phosphate-dependent aminotransferase family. In terms of assembly, homodimer. It depends on pyridoxal 5'-phosphate as a cofactor.

The catalysed reaction is an aromatic L-alpha-amino acid + 2-oxoglutarate = an aromatic oxo-acid + L-glutamate. Its function is as follows. Aminotransferase that catalyzes the conversion of aromatic amino acids and 2-oxoglutarate into corresponding aromatic oxo acids and L-glutamate. The sequence is that of Aromatic amino acid aminotransferase from Mycobacterium ulcerans (strain Agy99).